The chain runs to 126 residues: Profilin (126 aa).

It belongs to the profilin family. In terms of assembly, occurs in many kinds of cells as a complex with monomeric actin in a 1:1 ratio.

It is found in the cytoplasm. Its subcellular location is the cytoskeleton. In terms of biological role, binds to actin and affects the structure of the cytoskeleton. At high concentrations, profilin prevents the polymerization of actin, whereas it enhances it at low concentrations. By binding to PIP2, it inhibits the formation of IP3 and DG. This is Profilin from Bombyx mori (Silk moth).